We begin with the raw amino-acid sequence, 676 residues long: Methionine--tRNA ligase (676 aa).

Residues 15–25 carry the 'HIGH' region motif; sequence PYANGPIHLGH. Zn(2+) is bound by residues cysteine 146, cysteine 149, cysteine 159, and cysteine 162. Positions 332–336 match the 'KMSKS' region motif; it reads KMSKS. Lysine 335 provides a ligand contact to ATP. The tRNA-binding domain occupies 575 to 676; that stretch reads DFAKIDLRIA…EGAQPGMRVK (102 aa).

This sequence belongs to the class-I aminoacyl-tRNA synthetase family. MetG type 1 subfamily. Homodimer. The cofactor is Zn(2+).

It is found in the cytoplasm. The enzyme catalyses tRNA(Met) + L-methionine + ATP = L-methionyl-tRNA(Met) + AMP + diphosphate. In terms of biological role, is required not only for elongation of protein synthesis but also for the initiation of all mRNA translation through initiator tRNA(fMet) aminoacylation. The protein is Methionine--tRNA ligase of Shewanella sp. (strain ANA-3).